The chain runs to 1998 residues: Receptor-type tyrosine-protein phosphatase beta (1998 aa).

The signal sequence occupies residues methionine 1–alanine 22. Fibronectin type-III domains lie at glutamate 23–threonine 109, proline 113–proline 206, valine 207–methionine 291, glutamate 292–leucine 384, proline 378–threonine 466, alanine 470–alanine 556, glutamine 557–threonine 642, valine 643–aspartate 733, lysine 734–glutamate 821, proline 822–asparagine 913, proline 908–threonine 994, valine 995–alanine 1088, proline 1086–valine 1173, alanine 1176–serine 1263, proline 1264–aspartate 1357, lysine 1358–proline 1449, and proline 1449–alanine 1551. The Extracellular portion of the chain corresponds to glutamate 23–glutamate 1622. N-linked (GlcNAc...) asparagine glycosylation is found at asparagine 28, asparagine 53, asparagine 75, asparagine 173, asparagine 199, and asparagine 268. Residues asparagine 415, asparagine 422, asparagine 480, asparagine 575, asparagine 599, and asparagine 653 are each glycosylated (N-linked (GlcNAc...) asparagine). An N-linked (GlcNAc...) asparagine glycan is attached at asparagine 830. N-linked (GlcNAc...) asparagine glycosylation is found at asparagine 1041, asparagine 1097, asparagine 1164, asparagine 1186, asparagine 1213, asparagine 1275, asparagine 1368, asparagine 1471, asparagine 1475, and asparagine 1519. The helical transmembrane segment at glycine 1623 to cysteine 1643 threads the bilayer. The Cytoplasmic portion of the chain corresponds to arginine 1644–arginine 1997. Residues leucine 1704–valine 1964 enclose the Tyrosine-protein phosphatase domain. Residues aspartate 1871, cysteine 1905–arginine 1911, and glutamine 1949 contribute to the substrate site. Cysteine 1905 acts as the Phosphocysteine intermediate in catalysis. Position 1982 is a phosphotyrosine (tyrosine 1982).

This sequence belongs to the protein-tyrosine phosphatase family. Receptor class 3 subfamily. As to quaternary structure, monomer. Interacts with TEK. Interacts via fibronectin type-III 17 domain with CDH5. Detected in a complex with CNTN1 and NRCAM. Interacts (phosphorylated form) with FYN and GRB2. Interacts with IGFBP2. As to expression, expression is very high in the vasculature of lung, spleen, and kidney, as well as in the heart valves, and is also present in the endothelium of arterioles and venules. Also expressed in tumor vasculature.

The protein resides in the membrane. The enzyme catalyses O-phospho-L-tyrosyl-[protein] + H2O = L-tyrosyl-[protein] + phosphate. Functionally, plays an important role in blood vessel remodeling and angiogenesis. Not necessary for the initial formation of blood vessels, but is essential for their maintenance and remodeling. Can induce dephosphorylation of TEK/TIE2, CDH5/VE-cadherin and KDR/VEGFR-2. Regulates angiopoietin-TIE2 signaling in endothelial cells. Acts as a negative regulator of TIE2, and controls TIE2 driven endothelial cell proliferation, which in turn affects blood vessel remodeling during embryonic development and determines blood vessel size during perinatal growth. Essential for the maintenance of endothelial cell contact integrity and for the adhesive function of VE-cadherin in endothelial cells and this requires the presence of plakoglobin. The sequence is that of Receptor-type tyrosine-protein phosphatase beta (Ptprb) from Mus musculus (Mouse).